Consider the following 759-residue polypeptide: Catalase-peroxidase (759 aa).

A disordered region spans residues 1–24 (MTQDKCPFKEQPSQPNFAGGGTSN). A cross-link (tryptophyl-tyrosyl-methioninium (Trp-Tyr) (with M-268)) is located at residues 96 to 242 (WHSAGTYRVF…LAAAHMGLIY (147 aa)). Catalysis depends on His-97, which acts as the Proton acceptor. The segment at residues 242 to 268 (YVNPEGPDGNPDPIAAAHDIRDTFGRM) is a cross-link (tryptophyl-tyrosyl-methioninium (Tyr-Met) (with W-96)). His-283 contacts heme b.

Belongs to the peroxidase family. Peroxidase/catalase subfamily. In terms of assembly, homodimer or homotetramer. It depends on heme b as a cofactor. Post-translationally, formation of the three residue Trp-Tyr-Met cross-link is important for the catalase, but not the peroxidase activity of the enzyme.

The protein resides in the cytoplasm. The catalysed reaction is H2O2 + AH2 = A + 2 H2O. The enzyme catalyses 2 H2O2 = O2 + 2 H2O. Bifunctional enzyme with both catalase and broad-spectrum peroxidase activity. The polypeptide is Catalase-peroxidase (Neosartorya fischeri (strain ATCC 1020 / DSM 3700 / CBS 544.65 / FGSC A1164 / JCM 1740 / NRRL 181 / WB 181) (Aspergillus fischerianus)).